The following is a 750-amino-acid chain: Polyribonucleotide nucleotidyltransferase (750 aa).

2 residues coordinate Mg(2+): Asp519 and Asp525. One can recognise a KH domain in the interval 585–644 (PRVIAVKIPVDKIGEVIGPKGKMINQIQEDTGADISIEDDGTVYIGATNGPSADAARSAI). An S1 motif domain is found at 656–728 (GERYLGTVVK…DRGKLSLSPV (73 aa)). The segment at 725–750 (LSPVVAEEEGAASEDAPAEAAEESAE) is disordered. Positions 730-750 (AEEEGAASEDAPAEAAEESAE) are enriched in acidic residues.

This sequence belongs to the polyribonucleotide nucleotidyltransferase family. It depends on Mg(2+) as a cofactor.

The protein resides in the cytoplasm. The catalysed reaction is RNA(n+1) + phosphate = RNA(n) + a ribonucleoside 5'-diphosphate. Involved in mRNA degradation. Catalyzes the phosphorolysis of single-stranded polyribonucleotides processively in the 3'- to 5'-direction. This Paenarthrobacter aurescens (strain TC1) protein is Polyribonucleotide nucleotidyltransferase.